The following is a 365-amino-acid chain: Histidinol-phosphate aminotransferase (365 aa).

Lys-220 carries the N6-(pyridoxal phosphate)lysine modification.

Belongs to the class-II pyridoxal-phosphate-dependent aminotransferase family. Histidinol-phosphate aminotransferase subfamily. Homodimer. The cofactor is pyridoxal 5'-phosphate.

It catalyses the reaction L-histidinol phosphate + 2-oxoglutarate = 3-(imidazol-4-yl)-2-oxopropyl phosphate + L-glutamate. Its pathway is amino-acid biosynthesis; L-histidine biosynthesis; L-histidine from 5-phospho-alpha-D-ribose 1-diphosphate: step 7/9. The chain is Histidinol-phosphate aminotransferase from Neisseria meningitidis serogroup A / serotype 4A (strain DSM 15465 / Z2491).